Reading from the N-terminus, the 363-residue chain is Flagellar P-ring protein 2 (363 aa).

The N-terminal stretch at 1–20 is a signal peptide; that stretch reads MKLRTCCISLMLLLALPLQA.

It belongs to the FlgI family. The basal body constitutes a major portion of the flagellar organelle and consists of four rings (L,P,S, and M) mounted on a central rod.

The protein resides in the periplasm. It localises to the bacterial flagellum basal body. Its function is as follows. Assembles around the rod to form the L-ring and probably protects the motor/basal body from shearing forces during rotation. The sequence is that of Flagellar P-ring protein 2 from Photobacterium profundum (strain SS9).